The chain runs to 565 residues: Mannosyl-oligosaccharide 1,2-alpha-mannosidase (565 aa).

A disulfide bridge connects residues Cys-320 and Cys-363. Glu-378 (proton donor) is an active-site residue. Position 501 (Thr-501) interacts with Ca(2+). Basic and acidic residues-rich tracts occupy residues 526-538 (NEKAQMRESKVID) and 550-565 (KSADQEAKEIIEEIAG). A disordered region spans residues 526–565 (NEKAQMRESKVIDKSNLPEAQPVDKSADQEAKEIIEEIAG).

It belongs to the glycosyl hydrolase 47 family. Ca(2+) is required as a cofactor.

It carries out the reaction N(4)-(alpha-D-Man-(1-&gt;2)-alpha-D-Man-(1-&gt;2)-alpha-D-Man-(1-&gt;3)-[alpha-D-Man-(1-&gt;2)-alpha-D-Man-(1-&gt;3)-[alpha-D-Man-(1-&gt;2)-alpha-D-Man-(1-&gt;6)]-alpha-D-Man-(1-&gt;6)]-beta-D-Man-(1-&gt;4)-beta-D-GlcNAc-(1-&gt;4)-beta-D-GlcNAc)-L-asparaginyl-[protein] (N-glucan mannose isomer 9A1,2,3B1,2,3) + 4 H2O = N(4)-(alpha-D-Man-(1-&gt;3)-[alpha-D-Man-(1-&gt;3)-[alpha-D-Man-(1-&gt;6)]-alpha-D-Man-(1-&gt;6)]-beta-D-Man-(1-&gt;4)-beta-D-GlcNAc-(1-&gt;4)-beta-D-GlcNAc)-L-asparaginyl-[protein] (N-glucan mannose isomer 5A1,2) + 4 beta-D-mannose. The catalysed reaction is N(4)-(alpha-D-Man-(1-&gt;2)-alpha-D-Man-(1-&gt;2)-alpha-D-Man-(1-&gt;3)-[alpha-D-Man-(1-&gt;3)-[alpha-D-Man-(1-&gt;2)-alpha-D-Man-(1-&gt;6)]-alpha-D-Man-(1-&gt;6)]-beta-D-Man-(1-&gt;4)-beta-D-GlcNAc-(1-&gt;4)-beta-D-GlcNAc)-L-asparaginyl-[protein] (N-glucan mannose isomer 8A1,2,3B1,3) + 3 H2O = N(4)-(alpha-D-Man-(1-&gt;3)-[alpha-D-Man-(1-&gt;3)-[alpha-D-Man-(1-&gt;6)]-alpha-D-Man-(1-&gt;6)]-beta-D-Man-(1-&gt;4)-beta-D-GlcNAc-(1-&gt;4)-beta-D-GlcNAc)-L-asparaginyl-[protein] (N-glucan mannose isomer 5A1,2) + 3 beta-D-mannose. The protein operates within protein modification; protein glycosylation. Involved in the maturation of Asn-linked oligosaccharides. Trim a single alpha-1,2-linked mannose residue from Man(9)GlcNAc(2) to produce Man(8)GlcNAc(2). This Candida albicans (Yeast) protein is Mannosyl-oligosaccharide 1,2-alpha-mannosidase (MNS1).